Here is a 72-residue protein sequence, read N- to C-terminus: Large ribosomal subunit protein bL31 (72 aa).

Zn(2+) contacts are provided by C17, C19, C37, and C40.

This sequence belongs to the bacterial ribosomal protein bL31 family. Type A subfamily. As to quaternary structure, part of the 50S ribosomal subunit. The cofactor is Zn(2+).

Binds the 23S rRNA. In Clostridium botulinum (strain Loch Maree / Type A3), this protein is Large ribosomal subunit protein bL31.